We begin with the raw amino-acid sequence, 526 residues long: Putative ankyrin repeat protein R840 (526 aa).

ANK repeat units follow at residues 78–107 (TLNECLFISCKRGRNDFVKYFVSKGANIRS), 108–137 (RDNFAIKLACEHGHIEVVKYLIDNGVDIRS), 139–167 (KNYAVRIACNNGHIDIVKLLISKGANIRD), 169–197 (DNCAIKWASENGHIEIVKILVSQGYDSTS), 198–227 (NFNEPVILAVKNGHLEVVKYLVSQSDRCRN), 229–255 (SAIISAAENGHIEIVKFLASRGSNIRI), 256–285 (DDDYTIRIASGNGHLEVVKFLVSKGCNIRS), 286–315 (EIDHAVQWASTNGHLEVVEYLVSQGADIKS), 317–345 (YDRSVRCASQNGHIEVVKYLVSQGANIRN), 346–375 (INDYAVRYASENGHIEVVEYLVSQGANIRV), 376–405 (DNDSPLLRACLKGHIKVVKFLVSSGADIRV), 406–435 (NNYQPLLIAAGNGHLEILKYLVSQGVNVSI), 437–467 (NVPLVGIACIDGYGYFEIVKYLVSIGADINL), 468–497 (ADDMAIRLASEYGHLDIVKYLVENGANVRA), and 499–526 (NDYAIKQAHRKGHQEVVNYLLSKGAILS).

The protein is Putative ankyrin repeat protein R840 of Acanthamoeba polyphaga (Amoeba).